Here is a 286-residue protein sequence, read N- to C-terminus: Formamidopyrimidine-DNA glycosylase (286 aa).

Pro-2 (schiff-base intermediate with DNA) is an active-site residue. The Proton donor role is filled by Glu-3. Lys-61 acts as the Proton donor; for beta-elimination activity in catalysis. His-96, Arg-115, and Lys-161 together coordinate DNA. Residues 247–281 (EAYGREGEPCRRCGRAMRREAFMNRSSYFCPSCQR) form an FPG-type zinc finger. Arg-271 serves as the catalytic Proton donor; for delta-elimination activity.

The protein belongs to the FPG family. As to quaternary structure, monomer. It depends on Zn(2+) as a cofactor.

It carries out the reaction Hydrolysis of DNA containing ring-opened 7-methylguanine residues, releasing 2,6-diamino-4-hydroxy-5-(N-methyl)formamidopyrimidine.. The enzyme catalyses 2'-deoxyribonucleotide-(2'-deoxyribose 5'-phosphate)-2'-deoxyribonucleotide-DNA = a 3'-end 2'-deoxyribonucleotide-(2,3-dehydro-2,3-deoxyribose 5'-phosphate)-DNA + a 5'-end 5'-phospho-2'-deoxyribonucleoside-DNA + H(+). In terms of biological role, involved in base excision repair of DNA damaged by oxidation or by mutagenic agents. Acts as a DNA glycosylase that recognizes and removes damaged bases. Has a preference for oxidized purines, such as 7,8-dihydro-8-oxoguanine (8-oxoG). Has AP (apurinic/apyrimidinic) lyase activity and introduces nicks in the DNA strand. Cleaves the DNA backbone by beta-delta elimination to generate a single-strand break at the site of the removed base with both 3'- and 5'-phosphates. The sequence is that of Formamidopyrimidine-DNA glycosylase from Mycobacteroides abscessus (strain ATCC 19977 / DSM 44196 / CCUG 20993 / CIP 104536 / JCM 13569 / NCTC 13031 / TMC 1543 / L948) (Mycobacterium abscessus).